A 152-amino-acid chain; its full sequence is MSKATGFIKEFRDFAVKGNAIDLAVGVIIGAAFGKIVDSLVKDVVMPLVNFILGGSVDFSNKFLVLSMPDGYTGPMTYADLTKAGANVLAWGNFITIIINFVLLAFVIFWMVKAIYFARRKEEAAPEAPAAPPEDVTVLREIRDLLKDKQGS.

A run of 3 helical transmembrane segments spans residues 21-41 (IDLA…DSLV), 44-64 (VVMP…NKFL), and 92-112 (GNFI…FWMV).

It belongs to the MscL family. In terms of assembly, homopentamer.

Its subcellular location is the cell inner membrane. In terms of biological role, channel that opens in response to stretch forces in the membrane lipid bilayer. May participate in the regulation of osmotic pressure changes within the cell. This Bordetella pertussis (strain Tohama I / ATCC BAA-589 / NCTC 13251) protein is Large-conductance mechanosensitive channel.